The sequence spans 100 residues: Probable antitoxin MazE1 (100 aa).

Residues 77 to 100 (PYESEAERSAARARRNARQQRSAQ) are disordered.

As to quaternary structure, forms a complex with cognate toxin MazF1.

Its function is as follows. Probable antitoxin component of a type II toxin-antitoxin (TA) system. Labile antitoxin that binds to cognate MazF1 toxin and counteracts its endoribonuclease activity. This is Probable antitoxin MazE1 (mazE1) from Mycobacterium bovis (strain ATCC BAA-935 / AF2122/97).